A 545-amino-acid chain; its full sequence is Monocarboxylate transporter 8 (545 aa).

The segment at 1 to 98 (MALPSPASEE…VETRGTARGF (98 aa)) is disordered. Ala2 bears the N-acetylalanine mark. The Cytoplasmic portion of the chain corresponds to 2-102 (ALPSPASEEA…GTARGFQPPE (101 aa)). Tandem repeats lie at residues 29–50 (PVPEPEPEPEPEPEPEPEPVPV) and 51–72 (PPPEPQPEPEPQPLPDPAPLPV). A 2 X 22 AA approximate tandem repeats region spans residues 29–72 (PVPEPEPEPEPEPEPEPEPVPVPPPEPQPEPEPQPLPDPAPLPV). Residues 33–45 (PEPEPEPEPEPEP) are compositionally biased toward acidic residues. Over residues 46–70 (EPVPVPPPEPQPEPEPQPLPDPAPL) the composition is skewed to pro residues. A helical membrane pass occupies residues 103–123 (GGFGWIVVFAATWCNGSIFGI). The Extracellular segment spans residues 124-149 (HNSVGILYSMLLEEEKEKNRQVEFQA). A helical membrane pass occupies residues 150–170 (AWVGALAMGMIFFCSPIVSIF). Topologically, residues 171–181 (TDRLGCRITAT) are cytoplasmic. A helical transmembrane segment spans residues 182-202 (TGAAVAFIGLHTSSFTSSLSL). The Extracellular portion of the chain corresponds to 203–204 (RY). A helical membrane pass occupies residues 205-225 (FTYGILFGCGCSFAFQPSLVI). At 226–235 (LGHYFQRRLG) the chain is on the cytoplasmic side. Residues 236–256 (LANGVVSAGSSIFSMSFPFLI) form a helical membrane-spanning segment. Over 257–264 (KMLGDRIK) the chain is Extracellular. A helical membrane pass occupies residues 265–285 (LAQTFQVLSTFMFVLTLLSLT). The Cytoplasmic segment spans residues 286–328 (YRPLLPSSQDTPSKRGAHTLRQRFLVQFRKYFNMRVFRQRTYR). The helical transmembrane segment at 329-349 (IWAFGIAAAALGYFVPYVHLM) threads the bilayer. Topologically, residues 350–362 (KYVEDKFKEIKET) are extracellular. The chain crosses the membrane as a helical span at residues 363–383 (WVLLVCIGATSGLGRLVSGHI). Residues 384-392 (SDSIPGLKK) are Cytoplasmic-facing. The chain crosses the membrane as a helical span at residues 393–413 (IYLQVLSFLLLGLMSMMIPLC). The Extracellular portion of the chain corresponds to 414-415 (RD). A helical membrane pass occupies residues 416-436 (FGGLIVVCLFLGLCDGFFITI). Residues 437-453 (MAPIAFELVGPMQASQA) lie on the Cytoplasmic side of the membrane. Residues 454 to 474 (IGYLLGMMALPMIAGPPIAGL) form a helical membrane-spanning segment. The Extracellular portion of the chain corresponds to 475–483 (LRNCFGNYH). A helical membrane pass occupies residues 484 to 504 (VAFYFAGVPPIIGAVILFFVP). At 505-545 (LMHQRMFKKEQRESSKDKMLSHDPDPNGELLPGSPTPEEPI) the chain is on the cytoplasmic side. Over residues 514–529 (EQRESSKDKMLSHDPD) the composition is skewed to basic and acidic residues. A disordered region spans residues 514–545 (EQRESSKDKMLSHDPDPNGELLPGSPTPEEPI). Thr540 bears the Phosphothreonine mark.

It belongs to the major facilitator superfamily. Monocarboxylate porter (TC 2.A.1.13) family. As to quaternary structure, monomer. Homodimer. Homooligomer. As to expression, expressed at highest levels in liver, lower levels in brain, kidney and heart (at protein level). Expressed in microvessels of the blood-brain barrier (BBB) (at protein level).

Its subcellular location is the cell membrane. The protein resides in the apical cell membrane. The enzyme catalyses 3,3',5-triiodo-L-thyronine(out) = 3,3',5-triiodo-L-thyronine(in). The catalysed reaction is 3,3',5'-triiodo-L-thyronine(out) = 3,3',5'-triiodo-L-thyronine(in). It carries out the reaction L-thyroxine(out) = L-thyroxine(in). It catalyses the reaction 3,3'-diiodo-L-thyronine(out) = 3,3'-diiodo-L-thyronine(in). Functionally, specific thyroid hormone transmembrane transporter, that mediates both uptake and efflux of thyroid hormone across the cell membrane independently of pH or a Na(+) gradient. Major substrates are the iodothyronines T3 and T4 and to a lesser extent rT3 and 3,3-diiodothyronine (3,3'-T2). Acts as an important mediator of thyroid hormone transport, especially T3, through the blood-brain barrier. In Rattus norvegicus (Rat), this protein is Monocarboxylate transporter 8 (SLC16A2).